The following is a 509-amino-acid chain: 2,3-bisphosphoglycerate-independent phosphoglycerate mutase (509 aa).

Positions 14 and 64 each coordinate Mn(2+). The active-site Phosphoserine intermediate is Ser64. Residues His125, 155-156 (RD), Arg187, Arg193, 259-262 (RADR), and Lys332 contribute to the substrate site. Mn(2+) contacts are provided by Asp399, His403, Asp440, His441, and His459.

It belongs to the BPG-independent phosphoglycerate mutase family. Monomer. Mn(2+) is required as a cofactor.

It catalyses the reaction (2R)-2-phosphoglycerate = (2R)-3-phosphoglycerate. The protein operates within carbohydrate degradation; glycolysis; pyruvate from D-glyceraldehyde 3-phosphate: step 3/5. In terms of biological role, catalyzes the interconversion of 2-phosphoglycerate and 3-phosphoglycerate. The protein is 2,3-bisphosphoglycerate-independent phosphoglycerate mutase of Psychromonas ingrahamii (strain DSM 17664 / CCUG 51855 / 37).